The following is a 414-amino-acid chain: Imidazolonepropionase (414 aa).

Fe(3+) is bound by residues His95 and His97. The Zn(2+) site is built by His95 and His97. 4-imidazolone-5-propanoate-binding residues include Arg104, Tyr162, and His189. Tyr162 contributes to the N-formimidoyl-L-glutamate binding site. His252 is a binding site for Fe(3+). His252 is a binding site for Zn(2+). 4-imidazolone-5-propanoate is bound at residue Gln255. Asp326 is a binding site for Fe(3+). A Zn(2+)-binding site is contributed by Asp326. 2 residues coordinate N-formimidoyl-L-glutamate: Asn328 and Gly330. Residue Ser331 participates in 4-imidazolone-5-propanoate binding.

This sequence belongs to the metallo-dependent hydrolases superfamily. HutI family. It depends on Zn(2+) as a cofactor. Fe(3+) is required as a cofactor.

It is found in the cytoplasm. The enzyme catalyses 4-imidazolone-5-propanoate + H2O = N-formimidoyl-L-glutamate. It participates in amino-acid degradation; L-histidine degradation into L-glutamate; N-formimidoyl-L-glutamate from L-histidine: step 3/3. Catalyzes the hydrolytic cleavage of the carbon-nitrogen bond in imidazolone-5-propanoate to yield N-formimidoyl-L-glutamate. It is the third step in the universal histidine degradation pathway. This Streptomyces avermitilis (strain ATCC 31267 / DSM 46492 / JCM 5070 / NBRC 14893 / NCIMB 12804 / NRRL 8165 / MA-4680) protein is Imidazolonepropionase.